The chain runs to 68 residues: Protein SlyX homolog (68 aa).

The protein belongs to the SlyX family.

This chain is Protein SlyX homolog, found in Brucella melitensis biotype 1 (strain ATCC 23456 / CCUG 17765 / NCTC 10094 / 16M).